The primary structure comprises 79 residues: DNA-directed RNA polymerase subunit omega (79 aa).

The protein belongs to the RNA polymerase subunit omega family. In terms of assembly, in cyanobacteria the RNAP catalytic core is composed of 2 alpha, 1 beta, 1 beta', 1 gamma and 1 omega subunit. When a sigma factor is associated with the core the holoenzyme is formed, which can initiate transcription.

The enzyme catalyses RNA(n) + a ribonucleoside 5'-triphosphate = RNA(n+1) + diphosphate. In terms of biological role, promotes RNA polymerase assembly. Latches the N- and C-terminal regions of the beta' subunit thereby facilitating its interaction with the beta and alpha subunits. The protein is DNA-directed RNA polymerase subunit omega of Synechococcus sp. (strain JA-2-3B'a(2-13)) (Cyanobacteria bacterium Yellowstone B-Prime).